A 455-amino-acid chain; its full sequence is Acid sphingomyelinase-like phosphodiesterase 3b (455 aa).

The first 18 residues, 1 to 18, serve as a signal peptide directing secretion; the sequence is MRLLAWLIFLANWGGARA. The Zn(2+) site is built by Asp-28 and His-30. Cys-45 and Cys-64 form a disulfide bridge. Asn-72 carries an N-linked (GlcNAc...) asparagine glycan. Zn(2+)-binding residues include Asp-93 and Asn-134. N-linked (GlcNAc...) asparagine glycosylation is present at Asn-164. His-236, His-277, and His-279 together coordinate Zn(2+). Residue Asn-343 is glycosylated (N-linked (GlcNAc...) asparagine). Intrachain disulfides connect Cys-405-Cys-409 and Cys-415-Cys-428.

The protein belongs to the acid sphingomyelinase family. As to quaternary structure, interacts with TLR4, TLR7, TLR8 and TLR9. Zn(2+) is required as a cofactor. In terms of processing, N-glycosylated.

It localises to the secreted. Its subcellular location is the cell membrane. In terms of biological role, lipid-modulating phosphodiesterase. Active on the surface of macrophages and dendritic cells and strongly influences macrophage lipid composition and membrane fluidity. Acts as a negative regulator of Toll-like receptor signaling. Has in vitro phosphodiesterase activity, but the physiological substrate is unknown. Lacks activity with phosphocholine-containing lipids, but can cleave CDP-choline, and can release phosphate from ATP and ADP (in vitro). In Homo sapiens (Human), this protein is Acid sphingomyelinase-like phosphodiesterase 3b (SMPDL3B).